A 142-amino-acid polypeptide reads, in one-letter code: Large ribosomal subunit protein uL11 (142 aa).

Residues 84–103 (AGVKSGSGRPNSDKVGTVTD) are disordered.

It belongs to the universal ribosomal protein uL11 family. Part of the ribosomal stalk of the 50S ribosomal subunit. Interacts with L10 and the large rRNA to form the base of the stalk. L10 forms an elongated spine to which L12 dimers bind in a sequential fashion forming a multimeric L10(L12)X complex. Post-translationally, one or more lysine residues are methylated.

Functionally, forms part of the ribosomal stalk which helps the ribosome interact with GTP-bound translation factors. The protein is Large ribosomal subunit protein uL11 of Aliivibrio salmonicida (strain LFI1238) (Vibrio salmonicida (strain LFI1238)).